We begin with the raw amino-acid sequence, 235 residues long: Probable transcriptional regulatory protein MPN_478 (235 aa).

It belongs to the TACO1 family.

It localises to the cytoplasm. The sequence is that of Probable transcriptional regulatory protein MPN_478 from Mycoplasma pneumoniae (strain ATCC 29342 / M129 / Subtype 1) (Mycoplasmoides pneumoniae).